The primary structure comprises 187 residues: Protein P18, mitochondrial (187 aa).

The transit peptide at 1 to 17 directs the protein to the mitochondrion; that stretch reads MRRLSSQLMCTAAAVRF. Residues 160–187 are disordered; it reads NAAKAKADGKEHPSTLAQQQSLFDIKIQ.

It is found in the mitochondrion inner membrane. In terms of biological role, putative RNA-binding protein. The polypeptide is Protein P18, mitochondrial (Leishmania tarentolae (Sauroleishmania tarentolae)).